Reading from the N-terminus, the 290-residue chain is Pantothenate synthetase (290 aa).

Residue 30–37 coordinates ATP; that stretch reads MGALHEGH. Residue His37 is the Proton donor of the active site. Gln61 serves as a coordination point for (R)-pantoate. Gln61 is a beta-alanine binding site. Position 147–150 (147–150) interacts with ATP; it reads GEKD. A (R)-pantoate-binding site is contributed by Gln153. Residues Val176 and 184–187 contribute to the ATP site; that span reads KSSR.

It belongs to the pantothenate synthetase family. Homodimer.

It is found in the cytoplasm. It catalyses the reaction (R)-pantoate + beta-alanine + ATP = (R)-pantothenate + AMP + diphosphate + H(+). It functions in the pathway cofactor biosynthesis; (R)-pantothenate biosynthesis; (R)-pantothenate from (R)-pantoate and beta-alanine: step 1/1. Functionally, catalyzes the condensation of pantoate with beta-alanine in an ATP-dependent reaction via a pantoyl-adenylate intermediate. The chain is Pantothenate synthetase from Chlorobium chlorochromatii (strain CaD3).